We begin with the raw amino-acid sequence, 240 residues long: Biosynthetic peptidoglycan transglycosylase (240 aa).

Residues 12-31 (ALLWFAGGSVLLVLVFRFVP) traverse the membrane as a helical segment.

This sequence belongs to the glycosyltransferase 51 family.

The protein resides in the cell inner membrane. The enzyme catalyses [GlcNAc-(1-&gt;4)-Mur2Ac(oyl-L-Ala-gamma-D-Glu-L-Lys-D-Ala-D-Ala)](n)-di-trans,octa-cis-undecaprenyl diphosphate + beta-D-GlcNAc-(1-&gt;4)-Mur2Ac(oyl-L-Ala-gamma-D-Glu-L-Lys-D-Ala-D-Ala)-di-trans,octa-cis-undecaprenyl diphosphate = [GlcNAc-(1-&gt;4)-Mur2Ac(oyl-L-Ala-gamma-D-Glu-L-Lys-D-Ala-D-Ala)](n+1)-di-trans,octa-cis-undecaprenyl diphosphate + di-trans,octa-cis-undecaprenyl diphosphate + H(+). The protein operates within cell wall biogenesis; peptidoglycan biosynthesis. Functionally, peptidoglycan polymerase that catalyzes glycan chain elongation from lipid-linked precursors. In Pseudomonas fluorescens (strain Pf0-1), this protein is Biosynthetic peptidoglycan transglycosylase.